The chain runs to 452 residues: MAAAGLCFILAIVSSTSLLASVPVSALVEDLDDSFKENRKDDIWLVDFYAPWCGHCKKLEPVWNEVGIEIRTSGSPIRVGKIDATVYSSIASEFGVRGFPTIKALKGDMAYNYRGPRTKEDIVEFANRVAGPLIRPLPSQQMFDHVKKRHPVLFVYVGVESTLKEKFIEVASELIVYTYFFSASEDVLPKYVTLNEVPAVLVFKDSTYFVYDEYEDGDLSSWVNKERFEGYLHIDGFTLYELGDTGKLVAVAVIDEKNNSIEHTRIKSIAQDVAKNNRNNFHRDFQFGHMDGNDYINSLLMDELSIPTFVVLNTSNQQYFLPSKHIENPEEMIQFINSILDGTAEAQGGDGILQRIKRVFYDAKSTVVSVFKSSPLLGCFLFGLPLGVISIMCYGICTADTEDGSEEMTRKDVIDQNASDEGSDEEEEKGREITDVSDEDQQEKDFMEKKID.

An N-terminal signal peptide occupies residues 1–26 (MAAAGLCFILAIVSSTSLLASVPVSA). Residues 27–128 (LVEDLDDSFK…KEDIVEFANR (102 aa)) form the Thioredoxin domain. At 27–375 (LVEDLDDSFK…TVVSVFKSSP (349 aa)) the chain is on the lumenal side. Active-site nucleophile residues include cysteine 53 and cysteine 56. The cysteines at positions 53 and 56 are disulfide-linked. Asparagine 258 and asparagine 313 each carry an N-linked (GlcNAc...) asparagine glycan. Residues 376-396 (LLGCFLFGLPLGVISIMCYGI) traverse the membrane as a helical segment. Topologically, residues 397 to 452 (CTADTEDGSEEMTRKDVIDQNASDEGSDEEEEKGREITDVSDEDQQEKDFMEKKID) are cytoplasmic. Positions 405–452 (SEEMTRKDVIDQNASDEGSDEEEEKGREITDVSDEDQQEKDFMEKKID) are disordered. Over residues 443–452 (EKDFMEKKID) the composition is skewed to basic and acidic residues. The Di-lysine motif motif lies at 449–452 (KKID).

The protein belongs to the protein disulfide isomerase family.

It localises to the endoplasmic reticulum membrane. The enzyme catalyses Catalyzes the rearrangement of -S-S- bonds in proteins.. Functionally, probable disulfide isomerase, which participates in the folding of proteins containing disulfide bonds. May act as a dithiol oxidase. Acts as a regulator of endoplasmic reticulum-mitochondria contact sites via its ability to regulate redox signals. The chain is Protein disulfide-isomerase TMX3 (tmx3) from Xenopus laevis (African clawed frog).